Reading from the N-terminus, the 795-residue chain is Phenylalanine--tRNA ligase beta subunit (795 aa).

One can recognise a tRNA-binding domain in the interval 39–148 (AGSFNGVVVG…ADAPLGTDIR (110 aa)). Residues 401-476 (PKRATITLRR…RVYGYNNIPD (76 aa)) enclose the B5 domain. Residues Asp454, Asp460, Glu463, and Glu464 each contribute to the Mg(2+) site. The region spanning 701-794 (SRFPANRRDI…LKERFQASLR (94 aa)) is the FDX-ACB domain.

This sequence belongs to the phenylalanyl-tRNA synthetase beta subunit family. Type 1 subfamily. As to quaternary structure, tetramer of two alpha and two beta subunits. Mg(2+) serves as cofactor.

The protein localises to the cytoplasm. The enzyme catalyses tRNA(Phe) + L-phenylalanine + ATP = L-phenylalanyl-tRNA(Phe) + AMP + diphosphate + H(+). This chain is Phenylalanine--tRNA ligase beta subunit, found in Salmonella paratyphi A (strain ATCC 9150 / SARB42).